We begin with the raw amino-acid sequence, 146 residues long: Large ribosomal subunit protein bL21 (146 aa).

Residues 117–146 (ITIGKSAPKSSSKKETVKKETKPKSEKSTN) are disordered. Residues 128 to 146 (SKKETVKKETKPKSEKSTN) show a composition bias toward basic and acidic residues.

The protein belongs to the bacterial ribosomal protein bL21 family. As to quaternary structure, part of the 50S ribosomal subunit. Contacts protein L20.

This protein binds to 23S rRNA in the presence of protein L20. This Prochlorococcus marinus (strain MIT 9301) protein is Large ribosomal subunit protein bL21.